Reading from the N-terminus, the 256-residue chain is DNA repair protein RecO (256 aa).

Belongs to the RecO family.

Functionally, involved in DNA repair and RecF pathway recombination. In Streptococcus pneumoniae serotype 2 (strain D39 / NCTC 7466), this protein is DNA repair protein RecO.